We begin with the raw amino-acid sequence, 453 residues long: Probable tRNA methyltransferase 9B (453 aa).

Phosphoserine is present on Ser214.

The protein belongs to the methyltransferase superfamily.

May modify wobble uridines in specific arginine and glutamic acid tRNAs. Acts as a tumor suppressor by promoting the expression of LIN9. The protein is Probable tRNA methyltransferase 9B (TRMT9B) of Bos taurus (Bovine).